We begin with the raw amino-acid sequence, 184 residues long: Autophagy-related protein 101 (184 aa).

Belongs to the ATG101 family. Component of the atg1 kinase complex composed of at least atg1, atg13, atg17 and atg101. Interacts directly with atg13.

The protein resides in the cytoplasm. The protein localises to the nucleus. Its subcellular location is the preautophagosomal structure membrane. Functionally, autophagy factor required for autophagosome formation. Component of the atg1 kinase complex in which it stabilizes atg13. Is also responsible for recruiting downstream factors to the autophagosome-formation site. Has a role in meiosis and sporulation. This Schizosaccharomyces pombe (strain 972 / ATCC 24843) (Fission yeast) protein is Autophagy-related protein 101.